Here is a 635-residue protein sequence, read N- to C-terminus: Threonine--tRNA ligase (635 aa).

In terms of domain architecture, TGS spans 1–58; it reads MIHVTCNQEAFELPEGASAMDLANKMKQSHCFVGALINDQEKDLSTTLQDGDTVLFLT. The catalytic stretch occupies residues 237–528; that stretch reads DHRVLGTKLD…LIEHFKGRFP (292 aa). 3 residues coordinate Zn(2+): cysteine 328, histidine 379, and histidine 505.

Belongs to the class-II aminoacyl-tRNA synthetase family. Homodimer. It depends on Zn(2+) as a cofactor.

It is found in the cytoplasm. The enzyme catalyses tRNA(Thr) + L-threonine + ATP = L-threonyl-tRNA(Thr) + AMP + diphosphate + H(+). In terms of biological role, catalyzes the attachment of threonine to tRNA(Thr) in a two-step reaction: L-threonine is first activated by ATP to form Thr-AMP and then transferred to the acceptor end of tRNA(Thr). Also edits incorrectly charged L-seryl-tRNA(Thr). This Chlamydia trachomatis serovar L2b (strain UCH-1/proctitis) protein is Threonine--tRNA ligase.